The primary structure comprises 541 residues: CTP synthase (541 aa).

The interval 1–271 is amidoligase domain; sequence MVGKLNPTRF…DTQILKHFDV (271 aa). Residue serine 19 participates in CTP binding. UTP is bound at residue serine 19. ATP is bound by residues 20 to 25 and aspartate 77; that span reads SLGKGL. Aspartate 77 and glutamate 145 together coordinate Mg(2+). CTP-binding positions include 152-154, 192-197, and lysine 228; these read DIE and KTKPTQ. UTP-binding positions include 192-197 and lysine 228; that span reads KTKPTQ. Residues 296–537 enclose the Glutamine amidotransferase type-1 domain; sequence VIAIVGKYVT…VTSTLQVKKA (242 aa). Glycine 355 is a binding site for L-glutamine. Cysteine 382 serves as the catalytic Nucleophile; for glutamine hydrolysis. Residues 383–386, glutamate 406, and arginine 465 each bind L-glutamine; that span reads LGMQ. Active-site residues include histidine 510 and glutamate 512.

The protein belongs to the CTP synthase family. Homotetramer.

It catalyses the reaction UTP + L-glutamine + ATP + H2O = CTP + L-glutamate + ADP + phosphate + 2 H(+). The catalysed reaction is L-glutamine + H2O = L-glutamate + NH4(+). It carries out the reaction UTP + NH4(+) + ATP = CTP + ADP + phosphate + 2 H(+). Its pathway is pyrimidine metabolism; CTP biosynthesis via de novo pathway; CTP from UDP: step 2/2. Its activity is regulated as follows. Allosterically activated by GTP, when glutamine is the substrate; GTP has no effect on the reaction when ammonia is the substrate. The allosteric effector GTP functions by stabilizing the protein conformation that binds the tetrahedral intermediate(s) formed during glutamine hydrolysis. Inhibited by the product CTP, via allosteric rather than competitive inhibition. Functionally, catalyzes the ATP-dependent amination of UTP to CTP with either L-glutamine or ammonia as the source of nitrogen. Regulates intracellular CTP levels through interactions with the four ribonucleotide triphosphates. This Anaplasma phagocytophilum (strain HZ) protein is CTP synthase.